The following is a 345-amino-acid chain: S-adenosylmethionine:tRNA ribosyltransferase-isomerase (345 aa).

It belongs to the QueA family. As to quaternary structure, monomer.

The protein localises to the cytoplasm. The catalysed reaction is 7-aminomethyl-7-carbaguanosine(34) in tRNA + S-adenosyl-L-methionine = epoxyqueuosine(34) in tRNA + adenine + L-methionine + 2 H(+). Its pathway is tRNA modification; tRNA-queuosine biosynthesis. In terms of biological role, transfers and isomerizes the ribose moiety from AdoMet to the 7-aminomethyl group of 7-deazaguanine (preQ1-tRNA) to give epoxyqueuosine (oQ-tRNA). The chain is S-adenosylmethionine:tRNA ribosyltransferase-isomerase from Shewanella amazonensis (strain ATCC BAA-1098 / SB2B).